The following is a 649-amino-acid chain: Glycerol-3-phosphate dehydrogenase, mitochondrial (649 aa).

69–97 provides a ligand contact to FAD; that stretch reads DVLIIGGGATGTGVAVDASTRGLNVCLLE.

This sequence belongs to the FAD-dependent glycerol-3-phosphate dehydrogenase family. The cofactor is FAD.

The protein localises to the mitochondrion. The enzyme catalyses a quinone + sn-glycerol 3-phosphate = dihydroxyacetone phosphate + a quinol. The protein operates within polyol metabolism; glycerol degradation via glycerol kinase pathway; glycerone phosphate from sn-glycerol 3-phosphate (anaerobic route): step 1/1. This Schizosaccharomyces pombe (strain 972 / ATCC 24843) (Fission yeast) protein is Glycerol-3-phosphate dehydrogenase, mitochondrial (gut2).